Consider the following 485-residue polypeptide: MKNFKGRKFLTCVLVSLCTLNYSSISFAETQAGHANDITKNASSIDTGIGNLTYNNQEVLAVNGDKVESFVPKESINSNGKFVVVDVRKNHLQRHQSIFRLLDSVANRTYPGAVQLANKAFADNQPSLLVAKRKPLNISIDLPGMRKENTITVQNPTYGNVAGAVDDLVSTWNEKYSATHTLPARMQYTESMVYSKAQIASALNVNAKYLDNSLNIDFNAVANGEKKVMVAAYKQIFYTVSAELPNNPSDLFDNSVTFGELTRKGVSNSAPPVMVSNVAYGRTVYVKLETTSKSKDVQAAFKALLKNNSVETSGQYKDIFEESTFTAVVLGGDAKEHNKVVTKDFNEIRNIIKDNAELSFKNPAYPISYTSTFLKDNATAAVHNNTDYIETTTTEYSSAKMTLDHYGAYVAQFDVSWDGFTFDQNGKEILTHKTWEGSGKDKTAHYSTVIPLPPNSKNIKIVARECTGLAWEWWRTIIKMNKMFH.

The signal sequence occupies residues 1-28 (MKNFKGRKFLTCVLVSLCTLNYSSISFA). A run of 4 beta stranded transmembrane segments spans residues 196-209 (KAQIASALNVNAKY), 216-225 (IDFNAVANGE), 294-303 (SKDVQAAFKA), and 311-323 (ETSGQYKDIFEES). A Conserved undecapeptide motif is present at residues 465–475 (ECTGLAWEWWR).

It belongs to the cholesterol-dependent cytolysin family. As to quaternary structure, homooligomeric pore complex of 35 to 50 subunits; when inserted in the host membrane.

The protein resides in the secreted. The protein localises to the host cell membrane. Functionally, a cholesterol-dependent toxin with hemolytic activity against host red blood cells. Causes cytolysis by forming pores in cholesterol containing host membranes. binding to target membranes, the protein undergoes a major conformation change, leading to its insertion in the host membrane and formation of an oligomeric pore complex. Cholesterol is required for binding to host membranes, membrane insertion and pore formation; cholesterol binding is mediated by a Thr-Leu pair in the C-terminus. Can be reversibly inactivated by oxidation. This is Hemolysin from Bacillus cereus.